A 292-amino-acid chain; its full sequence is uncharacterized protein (292 aa).

Disordered stretches follow at residues 29-50 (SEKP…LRDS) and 166-292 (VKRK…EELK). Ser-50 is modified (phosphoserine). 2 stretches are compositionally biased toward polar residues: residues 176 to 189 (NSKN…PVNN) and 208 to 217 (GSPTNFSKLI). Basic and acidic residues predominate over residues 221-239 (YKDEWLQQQKADSDRRTPK). Composition is skewed to polar residues over residues 240–250 (TSEASVSTQST) and 260–270 (DTETPQNSETP).

Post-translationally, phosphorylated upon DNA damage.

This is an uncharacterized protein from Rattus norvegicus (Rat).